A 313-amino-acid chain; its full sequence is Monoglyceride lipase (313 aa).

Residues Gly121 to Gly125 carry the GXSXG motif. The active-site Nucleophile is the Ser123. Catalysis depends on charge relay system residues Asp251 and His281.

Belongs to the AB hydrolase superfamily. Monoacylglycerol lipase family.

The protein resides in the lipid droplet. The protein localises to the cytoplasm. It localises to the endoplasmic reticulum. It is found in the mitochondrion outer membrane. It carries out the reaction Hydrolyzes glycerol monoesters of long-chain fatty acids.. The catalysed reaction is a fatty acid ethyl ester + H2O = ethanol + a fatty acid + H(+). The enzyme catalyses 1-(9Z-octadecenoyl)-glycerol + H2O = glycerol + (9Z)-octadecenoate + H(+). It catalyses the reaction 2-(9Z-octadecenoyl)-glycerol + H2O = glycerol + (9Z)-octadecenoate + H(+). It carries out the reaction 1-hexadecanoylglycerol + H2O = glycerol + hexadecanoate + H(+). The catalysed reaction is 2-hexadecanoylglycerol + H2O = glycerol + hexadecanoate + H(+). The enzyme catalyses ethyl hexadecanoate + H2O = ethanol + hexadecanoate + H(+). It catalyses the reaction ethyl (9Z)-octadecenoate + H2O = ethanol + (9Z)-octadecenoate + H(+). It carries out the reaction ethyl (9Z)-hexadecenoate + H2O = (9Z)-hexadecenoate + ethanol + H(+). The catalysed reaction is ethyl octadecanoate + H2O = ethanol + octadecanoate + H(+). It participates in glycerolipid metabolism; triacylglycerol degradation. Functionally, converts monoacylglycerides (MAG) to free fatty acids and glycerol. Has a strong preference for monounsaturated monoglycerides. Required for efficient degradation of MAG, short-lived intermediates of glycerolipid metabolism which may also function as lipid signaling molecules. Controls inactivation of the signaling lipid N-palmitoylethanolamine (PEA). Involved in fatty acid ethyl ester (FAEE) catabolism. FAEEs are non-oxidative metabolites of ethanol that are transiently incorporated into lipid droplets (LDs). Their mobilization by LD-resident FAEE hydrolases facilitates a controlled metabolism of these potentially toxic lipid metabolites. The sequence is that of Monoglyceride lipase (YJU3) from Saccharomyces cerevisiae (strain ATCC 204508 / S288c) (Baker's yeast).